A 413-amino-acid chain; its full sequence is Exodeoxyribonuclease 7 large subunit (413 aa).

This sequence belongs to the XseA family. Heterooligomer composed of large and small subunits.

The protein resides in the cytoplasm. The enzyme catalyses Exonucleolytic cleavage in either 5'- to 3'- or 3'- to 5'-direction to yield nucleoside 5'-phosphates.. Functionally, bidirectionally degrades single-stranded DNA into large acid-insoluble oligonucleotides, which are then degraded further into small acid-soluble oligonucleotides. The chain is Exodeoxyribonuclease 7 large subunit from Corynebacterium efficiens (strain DSM 44549 / YS-314 / AJ 12310 / JCM 11189 / NBRC 100395).